Here is a 420-residue protein sequence, read N- to C-terminus: D-tagatose-1,6-bisphosphate aldolase subunit GatZ (420 aa).

Belongs to the GatZ/KbaZ family. GatZ subfamily. As to quaternary structure, forms a complex with GatY.

Its pathway is carbohydrate metabolism; D-tagatose 6-phosphate degradation; D-glyceraldehyde 3-phosphate and glycerone phosphate from D-tagatose 6-phosphate: step 2/2. Its function is as follows. Component of the tagatose-1,6-bisphosphate aldolase GatYZ that is required for full activity and stability of the Y subunit. Could have a chaperone-like function for the proper and stable folding of GatY. When expressed alone, GatZ does not show any aldolase activity. Is involved in the catabolism of galactitol. The polypeptide is D-tagatose-1,6-bisphosphate aldolase subunit GatZ (Escherichia coli O139:H28 (strain E24377A / ETEC)).